The sequence spans 45 residues: uncharacterized protein (45 aa).

Residues 5 to 25 (IFFIFALSGILAACTVGGGVS) form a helical membrane-spanning segment.

Its subcellular location is the membrane. This is an uncharacterized protein from Haemophilus influenzae (strain ATCC 51907 / DSM 11121 / KW20 / Rd).